We begin with the raw amino-acid sequence, 475 residues long: Tryptophan--tRNA ligase, cytoplasmic (475 aa).

The 57-residue stretch at 12 to 68 (SPQELFSSIAAQGELVKSLKARKAPKEEIDSAVKMLLSLKTSYKEAMGEDYKADCPP) folds into the WHEP-TRS domain. Positions 61–87 (DYKADCPPGNSTPDSHGDPEAVDDKED) are disordered. Position 158 is an N6-succinyllysine (Lys158). Residues 168–177 (PSSEAMHVGH) carry the 'HIGH' region motif. The short motif at 353–357 (KMSAS) is the 'KMSKS' region element. Ser355 is subject to Phosphoserine.

The protein belongs to the class-I aminoacyl-tRNA synthetase family. Homodimer. Interacts with oxidized form of GAPDH. Proteolytic cleavage generates 2 forms; T1-TrpRS and T2-TrpRS.

It localises to the cytoplasm. It catalyses the reaction tRNA(Trp) + L-tryptophan + ATP = L-tryptophyl-tRNA(Trp) + AMP + diphosphate + H(+). Functionally, catalyzes the attachment of tryptophan to tRNA(Trp) in a two-step reaction: tryptophan is first activated by ATP to form Trp-AMP and then transferred to the acceptor end of the tRNA(Trp). Could also possess an angiostatic activity. The chain is Tryptophan--tRNA ligase, cytoplasmic (WARS1) from Oryctolagus cuniculus (Rabbit).